The following is a 798-amino-acid chain: Interphotoreceptor matrix proteoglycan 1 (798 aa).

An N-terminal signal peptide occupies residues 1 to 20 (MNLEIKHAILVLWIFLQVQG). N142 carries N-linked (GlcNAc...) asparagine glycosylation. Residues 238–360 (SEEKVEFSIS…PEAYLTAADL (123 aa)) enclose the SEA 1 domain. T442 and T445 each carry an O-linked (GalNAc...) threonine glycan. The SEA 2 domain occupies 574-687 (HELVVFFSLR…YSLDIEPADQ (114 aa)). Residues N595 and N619 are each glycosylated (N-linked (GlcNAc...) asparagine). A Heparin- and hyaluronan-binding motif is present at residues 624–632 (KQLEILSFR). N-linked (GlcNAc...) asparagine glycosylation is found at N633 and N651. A disordered region spans residues 741–798 (ASQGQATPCRPPDHSTNQARQPSVKKLQRQQNKVVKKRNSELSATDFEELDDQDWEGN). The span at 786-798 (DFEELDDQDWEGN) shows a compositional bias: acidic residues.

In terms of processing, highly glycosylated (N- and O-linked carbohydrates and sialic acid).

The protein localises to the cell projection. It localises to the cilium. The protein resides in the photoreceptor outer segment. It is found in the secreted. Its subcellular location is the extracellular space. The protein localises to the extracellular matrix. It localises to the interphotoreceptor matrix. The protein resides in the photoreceptor inner segment. Its function is as follows. Chondroitin sulfate-, heparin- and hyaluronan-binding protein. May serve to form a basic macromolecular scaffold comprising the insoluble interphotoreceptor matrix. The sequence is that of Interphotoreceptor matrix proteoglycan 1 from Rattus norvegicus (Rat).